Consider the following 404-residue polypeptide: Probable tRNA sulfurtransferase (404 aa).

The region spanning 61 to 166 (EAVSERLKDV…SGYSYIMCDE (106 aa)) is the THUMP domain. Residues 184 to 185 (LL), 209 to 210 (HF), Arg266, Gly288, and Gln297 contribute to the ATP site.

This sequence belongs to the ThiI family.

It localises to the cytoplasm. The enzyme catalyses [ThiI sulfur-carrier protein]-S-sulfanyl-L-cysteine + a uridine in tRNA + 2 reduced [2Fe-2S]-[ferredoxin] + ATP + H(+) = [ThiI sulfur-carrier protein]-L-cysteine + a 4-thiouridine in tRNA + 2 oxidized [2Fe-2S]-[ferredoxin] + AMP + diphosphate. It catalyses the reaction [ThiS sulfur-carrier protein]-C-terminal Gly-Gly-AMP + S-sulfanyl-L-cysteinyl-[cysteine desulfurase] + AH2 = [ThiS sulfur-carrier protein]-C-terminal-Gly-aminoethanethioate + L-cysteinyl-[cysteine desulfurase] + A + AMP + 2 H(+). It functions in the pathway cofactor biosynthesis; thiamine diphosphate biosynthesis. Catalyzes the ATP-dependent transfer of a sulfur to tRNA to produce 4-thiouridine in position 8 of tRNAs, which functions as a near-UV photosensor. Also catalyzes the transfer of sulfur to the sulfur carrier protein ThiS, forming ThiS-thiocarboxylate. This is a step in the synthesis of thiazole, in the thiamine biosynthesis pathway. The sulfur is donated as persulfide by IscS. In Bacillus cereus (strain ZK / E33L), this protein is Probable tRNA sulfurtransferase.